The primary structure comprises 1477 residues: Lysine-specific demethylase rbr-2 (1477 aa).

A disordered region spans residues 1–37; sequence MRARRQENSISTPSAPSTSTSPRKKASIGNSRSKNHG. The segment covering 9-21 has biased composition (low complexity); sequence SISTPSAPSTSTS. Residues 56–97 enclose the JmjN domain; the sequence is APIYYPTEEEFSDPIEYVAKIRHEAEKFGVVKIVPPANFKPP. The region spanning 121-218 is the ARID domain; that stretch reads VKEKHTFIDR…HIEPFNRNLK (98 aa). The interval 222–314 is disordered; the sequence is MKNDDESDDE…KAEGDDDDDE (93 aa). Positions 246-259 are enriched in basic and acidic residues; sequence MRTEIEVPNDKTTE. Basic residues-rich tracts occupy residues 272–283 and 295–304; these read GRRRSKNKKASS and NSTRGRKNKK. The PHD-type 1 zinc-finger motif lies at 319 to 371; sequence QVFCVACNEGKDEDLLLLCDIDGCNNGRHTYCCDPVLDEVPEGEWRCPKCIES. Positions 468-634 constitute a JmjC domain; the sequence is QYASHAWNLN…KGRECVESYS (167 aa). His514, Asp517, and His602 together coordinate Fe cation. Residues 874–926 adopt a coiled-coil conformation; that stretch reads IIDKLEKWMEQVEMWRNRAKDAIYREQEYSKEEIEKIIEEGDEYDIKLEEIDE. A PHD-type 2 zinc finger spans residues 1203–1257; it reads LEACSCLGFNKSDDSESTLTCIMCDSEFHVRCCEWSPFLEKLPEGCFLCVRCLRG. The tract at residues 1375–1404 is disordered; that stretch reads TAKRKRPSVSHKETSKKSRKRQSQASPSEY. The segment at 1411-1466 adopts a PHD-type 3 zinc-finger fold; that stretch reads FKSCQARACLKPYGDSVNWVMCEAGCKNWFHVICLGFTLREINDMHEYRCSSCLDH.

It belongs to the JARID1 histone demethylase family. Fe(2+) is required as a cofactor.

The protein localises to the nucleus. It catalyses the reaction N(6),N(6),N(6)-trimethyl-L-lysyl(4)-[histone H3] + 3 2-oxoglutarate + 3 O2 = L-lysyl(4)-[histone H3] + 3 formaldehyde + 3 succinate + 3 CO2. Functionally, histone demethylase that specifically demethylates 'Lys-4' of histone H3, thereby playing a central role in histone code. Does not demethylate histone H3 'Lys-9', H3 'Lys-27', H3 'Lys-36', H3 'Lys-79' or H4 'Lys-20'. Demethylates trimethylated and dimethylated but not monomethylated H3 'Lys-4'. Required for normal longevity of the soma in a germline-dependent manner. Implicated in the epigenetic inheritance of lifespan over several generations. Involved in larval development and vulva formation. The protein is Lysine-specific demethylase rbr-2 (rbr-2) of Caenorhabditis elegans.